The primary structure comprises 85 residues: Beta-defensin 18 (85 aa).

The N-terminal stretch at 1–23 (MQSAMKLFFIFLIFVFSVSCGPS) is a signal peptide. Intrachain disulfides connect cysteine 39/cysteine 65, cysteine 46/cysteine 60, and cysteine 50/cysteine 66.

This sequence belongs to the beta-defensin family.

The protein localises to the secreted. Functionally, has antibacterial activity. This Rattus norvegicus (Rat) protein is Beta-defensin 18 (Defb18).